Consider the following 402-residue polypeptide: NADH-quinone oxidoreductase subunit D (402 aa).

Belongs to the complex I 49 kDa subunit family. NDH-1 is composed of 14 different subunits. Subunits NuoB, C, D, E, F, and G constitute the peripheral sector of the complex.

It localises to the cell inner membrane. The enzyme catalyses a quinone + NADH + 5 H(+)(in) = a quinol + NAD(+) + 4 H(+)(out). In terms of biological role, NDH-1 shuttles electrons from NADH, via FMN and iron-sulfur (Fe-S) centers, to quinones in the respiratory chain. The immediate electron acceptor for the enzyme in this species is believed to be ubiquinone. Couples the redox reaction to proton translocation (for every two electrons transferred, four hydrogen ions are translocated across the cytoplasmic membrane), and thus conserves the redox energy in a proton gradient. The sequence is that of NADH-quinone oxidoreductase subunit D from Cereibacter sphaeroides (strain ATCC 17025 / ATH 2.4.3) (Rhodobacter sphaeroides).